Here is a 139-residue protein sequence, read N- to C-terminus: Cytochrome c-type biogenesis protein CcmE 2 (139 aa).

Topologically, residues 1–9 are cytoplasmic; sequence MASLKKSRR. A helical; Signal-anchor for type II membrane protein membrane pass occupies residues 10–30; that stretch reads VRLILFSGVALVSATALIGYA. Over 31 to 139 the chain is Periplasmic; that stretch reads MRDGIQFFRT…ELAEMEALRD (109 aa). Residues His-122 and Tyr-126 each contribute to the heme site.

The protein belongs to the CcmE/CycJ family.

Its subcellular location is the cell inner membrane. Its function is as follows. Heme chaperone required for the biogenesis of c-type cytochromes. Transiently binds heme delivered by CcmC and transfers the heme to apo-cytochromes in a process facilitated by CcmF and CcmH. The polypeptide is Cytochrome c-type biogenesis protein CcmE 2 (Ruegeria pomeroyi (strain ATCC 700808 / DSM 15171 / DSS-3) (Silicibacter pomeroyi)).